The primary structure comprises 196 residues: MADILTQLQTCLDQLATQFYATLCYLTTYHDNIPATPPPTSTTPSAAPLLAKIPKNASTPPVPASAPQAAQSQSQASPPPPDTANPQTGGQHADQQQQSPDGEGLPAPDSPATFAARQRELARDLVIKEQQIEYLISVLPGIDSSEAEQERRIRELEGELRIVEGVREERRRELGVLRRRLEGVLGVVERGIYSRD.

Positions 52–111 (KIPKNASTPPVPASAPQAAQSQSQASPPPPDTANPQTGGQHADQQQQSPDGEGLPAPDSP) are disordered. 2 stretches are compositionally biased toward low complexity: residues 65-76 (SAPQAAQSQSQA) and 87-98 (QTGGQHADQQQQ). A coiled-coil region spans residues 144–174 (SSEAEQERRIRELEGELRIVEGVREERRREL).

The protein belongs to the Mediator complex subunit 21 family. In terms of assembly, component of the Mediator complex.

The protein resides in the nucleus. Component of the Mediator complex, a coactivator involved in the regulated transcription of nearly all RNA polymerase II-dependent genes. Mediator functions as a bridge to convey information from gene-specific regulatory proteins to the basal RNA polymerase II transcription machinery. Mediator is recruited to promoters by direct interactions with regulatory proteins and serves as a scaffold for the assembly of a functional preinitiation complex with RNA polymerase II and the general transcription factors. The protein is Mediator of RNA polymerase II transcription subunit 21 (srb7) of Aspergillus niger (strain ATCC MYA-4892 / CBS 513.88 / FGSC A1513).